The following is a 263-amino-acid chain: Hydroxyethylthiazole kinase (263 aa).

Met39 contacts substrate. ATP contacts are provided by Lys115 and Thr160. Substrate is bound at residue Gly187.

Belongs to the Thz kinase family. Mg(2+) is required as a cofactor.

It carries out the reaction 5-(2-hydroxyethyl)-4-methylthiazole + ATP = 4-methyl-5-(2-phosphooxyethyl)-thiazole + ADP + H(+). The protein operates within cofactor biosynthesis; thiamine diphosphate biosynthesis; 4-methyl-5-(2-phosphoethyl)-thiazole from 5-(2-hydroxyethyl)-4-methylthiazole: step 1/1. Functionally, catalyzes the phosphorylation of the hydroxyl group of 4-methyl-5-beta-hydroxyethylthiazole (THZ). This chain is Hydroxyethylthiazole kinase, found in Staphylococcus aureus (strain JH9).